Consider the following 210-residue polypeptide: Holliday junction resolvase RecU (210 aa).

The interval 1–34 (MAFHYPNGQPYSNHETKQPKKQGRHTSPTTLYGK) is disordered. Mg(2+) is bound by residues Thr90, Asp92, Glu105, and Gln124.

The protein belongs to the RecU family. Mg(2+) is required as a cofactor.

The protein localises to the cytoplasm. It catalyses the reaction Endonucleolytic cleavage at a junction such as a reciprocal single-stranded crossover between two homologous DNA duplexes (Holliday junction).. Endonuclease that resolves Holliday junction intermediates in genetic recombination. Cleaves mobile four-strand junctions by introducing symmetrical nicks in paired strands. Promotes annealing of linear ssDNA with homologous dsDNA. Required for DNA repair, homologous recombination and chromosome segregation. In Latilactobacillus sakei subsp. sakei (strain 23K) (Lactobacillus sakei subsp. sakei), this protein is Holliday junction resolvase RecU.